A 312-amino-acid polypeptide reads, in one-letter code: Pollen allergen Phl p 5.0101 (312 aa).

An N-terminal signal peptide occupies residues 1-25 (MAVHQYTVALFLAVALVAGPAASYA).

Belongs to the Poa p IX/Phl p VI allergen family.

Its subcellular location is the secreted. This chain is Pollen allergen Phl p 5.0101, found in Phleum pratense (Common timothy).